The chain runs to 102 residues: Parathymosin (102 aa).

The interval 1–102 is disordered; sequence MSEKSVEAAA…RQKTENGASA (102 aa). An N-acetylserine modification is found at Ser-2. Ser-2 carries the post-translational modification Phosphoserine. N6-acetyllysine is present on Lys-4. Ser-5 and Ser-13 each carry phosphoserine. Over residues 13–37 the composition is skewed to basic and acidic residues; the sequence is SAKDLKEKKEKVEEKAGRKERKKEV. N6-acetyllysine is present on Lys-15. The segment covering 38–76 has biased composition (acidic residues); the sequence is VEEEENGAEEEEEETAEDGEEEDDGDEEDEEEEEEEDEG. Position 52 is a phosphothreonine (Thr-52). The residue at position 92 (Lys-92) is an N6-acetyllysine.

The protein belongs to the pro/parathymosin family.

Its function is as follows. Parathymosin may mediate immune function by blocking the effect of prothymosin alpha which confers resistance to certain opportunistic infections. This chain is Parathymosin (PTMS), found in Bos taurus (Bovine).